Here is a 370-residue protein sequence, read N- to C-terminus: MDPSETAALHHCSADSSPADEARVPQSTELIPRRPVSRSPTCARCRNHGVTAHLKGHKRLCLFQACECHKCVLILERRRVMAAQVALRRQQEAQLKRHLAQGLMKGATPLKAPLRVKKGAIRPGIPSGKENIAPQPQSPHGAVPLVLTPPGKENYGPLLLSRPPEALPLPWTPVPPGPWGPGHWLPPGLSMPPPVVCRLLCQEPAVPLHPFPGFDPGTSLRLPTHGTLPTCPGSRSVLTAPLSGEPQGPPNLPHTCSTLILQSCGTPDSLLLQPQAPGASCLAWTSGPSERQLQREAAEALVGLKDSSQAPRLTPSVPPNPAWISLLHPCGPPAPPGGRGFQPVGPPLRPSPGSSVSLHIGRLGSISLLS.

Positions 1 to 38 (MDPSETAALHHCSADSSPADEARVPQSTELIPRRPVSR) are disordered. The DM DNA-binding region spans 42–89 (CARCRNHGVTAHLKGHKRLCLFQACECHKCVLILERRRVMAAQVALRR). The disordered stretch occupies residues 334–356 (APPGGRGFQPVGPPLRPSPGSSV).

Belongs to the DMRT family. In terms of tissue distribution, expressed in testis. Highly expressed in ovary.

It localises to the nucleus. Its function is as follows. May be involved in sexual development. This is Doublesex- and mab-3-related transcription factor C2 (Dmrtc2) from Mus musculus (Mouse).